The chain runs to 482 residues: Cobyric acid synthase (482 aa).

The region spanning 243 to 430 (ACKVVVPQLE…LHGLFTSDAF (188 aa)) is the GATase cobBQ-type domain. Residue cysteine 325 is the Nucleophile of the active site. The active site involves histidine 422.

This sequence belongs to the CobB/CobQ family. CobQ subfamily.

It participates in cofactor biosynthesis; adenosylcobalamin biosynthesis. Catalyzes amidations at positions B, D, E, and G on adenosylcobyrinic A,C-diamide. NH(2) groups are provided by glutamine, and one molecule of ATP is hydrogenolyzed for each amidation. The protein is Cobyric acid synthase of Ruegeria sp. (strain TM1040) (Silicibacter sp.).